The sequence spans 247 residues: Transcription factor bHLH92 (247 aa).

Residues 85–134 (ERSRRHMLKERTRREKQKQSYLALHSLLPFATKNDKNSIVEKAVDEIAKL) enclose the bHLH domain.

As to quaternary structure, homodimer.

The protein resides in the nucleus. In Arabidopsis thaliana (Mouse-ear cress), this protein is Transcription factor bHLH92 (BHLH92).